We begin with the raw amino-acid sequence, 353 residues long: Feruloyl esterase B (353 aa).

Positions 1-18 are cleaved as a signal peptide; sequence MAIPLVLVLAWLLPVVLA. The catalytic stretch occupies residues 19–291; that stretch reads ASLTQVNNFG…VSVVLDWFGI (273 aa). Ser-136 acts as the Charge relay system in catalysis. Residues Asn-179 and Asn-246 are each glycosylated (N-linked (GlcNAc...) asparagine). The 37-residue stretch at 317 to 353 folds into the CBM1 domain; sequence CTAAHWAQCGGIGYSGCTACASPYTCQKANDYYSQCL.

Belongs to the carbohydrate esterase 1 (CE1) family. Feruloyl esterase type B subfamily. Glycosylated.

The protein localises to the secreted. It catalyses the reaction feruloyl-polysaccharide + H2O = ferulate + polysaccharide.. Its activity is regulated as follows. Inhibited by the specific serine esterase inhibitor AEBSF. Involved in degradation of plant cell walls. Hydrolyzes the feruloyl-arabinose ester bond in arabinoxylans, and the feruloyl-galactose and feruloyl-arabinose ester bonds in pectin. Binds strongly to cellulose. This chain is Feruloyl esterase B (FAEB), found in Talaromyces funiculosus (Fruitlet core rot fungus).